The primary structure comprises 387 residues: 8-amino-7-oxononanoate synthase (387 aa).

R19 contacts substrate. A pyridoxal 5'-phosphate-binding site is contributed by 106–107; that stretch reads GY. Residue H131 participates in substrate binding. The pyridoxal 5'-phosphate site is built by S177, H205, and T236. An N6-(pyridoxal phosphate)lysine modification is found at K239. T353 is a binding site for substrate.

Belongs to the class-II pyridoxal-phosphate-dependent aminotransferase family. BioF subfamily. In terms of assembly, homodimer. Pyridoxal 5'-phosphate is required as a cofactor.

It carries out the reaction 6-carboxyhexanoyl-[ACP] + L-alanine + H(+) = (8S)-8-amino-7-oxononanoate + holo-[ACP] + CO2. The protein operates within cofactor biosynthesis; biotin biosynthesis. Its function is as follows. Catalyzes the decarboxylative condensation of pimeloyl-[acyl-carrier protein] and L-alanine to produce 8-amino-7-oxononanoate (AON), [acyl-carrier protein], and carbon dioxide. This is 8-amino-7-oxononanoate synthase from Nitrosomonas europaea (strain ATCC 19718 / CIP 103999 / KCTC 2705 / NBRC 14298).